The sequence spans 352 residues: Probable dual-specificity RNA methyltransferase RlmN (352 aa).

Glu93 (proton acceptor) is an active-site residue. A Radical SAM core domain is found at 99–333 (FNYGYSVCVT…IRLERGSSID (235 aa)). Cysteines 106 and 336 form a disulfide. 3 residues coordinate [4Fe-4S] cluster: Cys113, Cys117, and Cys120. Residues 164–165 (GE), Ser196, and Asn295 contribute to the S-adenosyl-L-methionine site. The S-methylcysteine intermediate role is filled by Cys336.

It belongs to the radical SAM superfamily. RlmN family. [4Fe-4S] cluster serves as cofactor.

Its subcellular location is the cytoplasm. The catalysed reaction is adenosine(2503) in 23S rRNA + 2 reduced [2Fe-2S]-[ferredoxin] + 2 S-adenosyl-L-methionine = 2-methyladenosine(2503) in 23S rRNA + 5'-deoxyadenosine + L-methionine + 2 oxidized [2Fe-2S]-[ferredoxin] + S-adenosyl-L-homocysteine. It carries out the reaction adenosine(37) in tRNA + 2 reduced [2Fe-2S]-[ferredoxin] + 2 S-adenosyl-L-methionine = 2-methyladenosine(37) in tRNA + 5'-deoxyadenosine + L-methionine + 2 oxidized [2Fe-2S]-[ferredoxin] + S-adenosyl-L-homocysteine. Functionally, specifically methylates position 2 of adenine 2503 in 23S rRNA and position 2 of adenine 37 in tRNAs. The polypeptide is Probable dual-specificity RNA methyltransferase RlmN (Malacoplasma penetrans (strain HF-2) (Mycoplasma penetrans)).